Reading from the N-terminus, the 180-residue chain is Insulin-like growth factor 2 (180 aa).

A signal peptide spans 1–24; sequence MGIPVGKSMLVLLISLAFALCCIA. A b region spans residues 25–52; that stretch reads AYGPGETLCGGELVDTLQFVCSDRGFYF. 3 disulfides stabilise this stretch: C33–C71, C45–C84, and C70–C75. The interval 53–64 is c; sequence SRPSSRANRRSR. The tract at residues 65–85 is a; sequence GIVEECCFRSCDLALLETYCA. The interval 86–91 is d; it reads TPAKSE. A propeptide spans 92-180 (e peptide); sequence RDVSTSQAVL…ASSEMSSNHQ (89 aa). The tract at residues 157-180 is disordered; the sequence is PLIVLPPKDPAHGGASSEMSSNHQ.

The protein belongs to the insulin family. In terms of assembly, interacts with MYORG; this interaction is required for IGF2 secretion. Interacts with integrins ITGAV:ITGB3 and ITGA6:ITGB4; integrin-binding is required for IGF2 signaling. Interacts with IGFBP2. Post-translationally, proteolytically processed by PCSK4, proIGF2 is cleaved at Arg-128 and Arg-92 to generate big-IGF2 and mature IGF2. In terms of tissue distribution, expressed in the heart, blood serum, kidney and skeletal muscle including the tibialis anterior muscle.

It is found in the secreted. In terms of biological role, the insulin-like growth factors possess growth-promoting activity. Major fetal growth hormone in mammals. Plays a key role in regulating fetoplacental development. IGF2 is influenced by placental lactogen. Also involved in tissue differentiation. In adults, involved in glucose metabolism in adipose tissue, skeletal muscle and liver. Acts as a ligand for integrin which is required for IGF2 signaling. Positively regulates myogenic transcription factor MYOD1 function by facilitating the recruitment of transcriptional coactivators, thereby controlling muscle terminal differentiation. Inhibits myoblast differentiation and modulates metabolism via increasing the mitochondrial respiration rate. Its function is as follows. Preptin undergoes glucose-mediated co-secretion with insulin, and acts as a physiological amplifier of glucose-mediated insulin secretion. Exhibits osteogenic properties by increasing osteoblast mitogenic activity through phosphoactivation of MAPK1 and MAPK3. The sequence is that of Insulin-like growth factor 2 from Mus musculus (Mouse).